The chain runs to 559 residues: Potassium-transporting ATPase potassium-binding subunit (559 aa).

13 helical membrane passes run 5–25, 27–47, 63–83, 132–152, 170–190, 253–273, 283–303, 327–347, 356–376, 379–399, 416–436, 484–504, and 524–544; these read GFLL…PLGS, LARL…RILW, LLAL…LLFW, GLTV…FALI, LVRI…LFFI, LAQM…FGEA, LLWA…WAEV, FGVL…CGAV, ALGG…FGGV, GLYG…LMIG, MTAL…ALAM, LLAF…MAIA, and GALF…LTFI.

This sequence belongs to the KdpA family. In terms of assembly, the system is composed of three essential subunits: KdpA, KdpB and KdpC.

It localises to the cell inner membrane. Its function is as follows. Part of the high-affinity ATP-driven potassium transport (or Kdp) system, which catalyzes the hydrolysis of ATP coupled with the electrogenic transport of potassium into the cytoplasm. This subunit binds the periplasmic potassium ions and delivers the ions to the membrane domain of KdpB through an intramembrane tunnel. The protein is Potassium-transporting ATPase potassium-binding subunit of Salmonella newport (strain SL254).